A 37-amino-acid polypeptide reads, in one-letter code: Trypsin inhibitor 3 (37 aa).

Cystine bridges form between Cys4-Cys21, Cys11-Cys25, and Cys20-Cys36.

Its function is as follows. Trypsin inhibitor. The sequence is that of Trypsin inhibitor 3 from Spinacia oleracea (Spinach).